A 216-amino-acid chain; its full sequence is Probable transaldolase (216 aa).

Lys-83 (schiff-base intermediate with substrate) is an active-site residue.

The protein belongs to the transaldolase family. Type 3B subfamily.

It localises to the cytoplasm. It carries out the reaction D-sedoheptulose 7-phosphate + D-glyceraldehyde 3-phosphate = D-erythrose 4-phosphate + beta-D-fructose 6-phosphate. Its pathway is carbohydrate degradation; pentose phosphate pathway; D-glyceraldehyde 3-phosphate and beta-D-fructose 6-phosphate from D-ribose 5-phosphate and D-xylulose 5-phosphate (non-oxidative stage): step 2/3. Functionally, transaldolase is important for the balance of metabolites in the pentose-phosphate pathway. The sequence is that of Probable transaldolase from Thermoanaerobacter sp. (strain X514).